The sequence spans 562 residues: NAD-dependent malic enzyme (562 aa).

Tyr-101 functions as the Proton donor in the catalytic mechanism. Arg-154 contacts NAD(+). The active-site Proton acceptor is the Lys-172. Positions 243, 244, and 267 each coordinate a divalent metal cation. Positions 267 and 415 each coordinate NAD(+).

Belongs to the malic enzymes family. As to quaternary structure, homotetramer. Requires Mg(2+) as cofactor. The cofactor is Mn(2+).

The catalysed reaction is (S)-malate + NAD(+) = pyruvate + CO2 + NADH. It catalyses the reaction oxaloacetate + H(+) = pyruvate + CO2. In Shewanella piezotolerans (strain WP3 / JCM 13877), this protein is NAD-dependent malic enzyme.